A 258-amino-acid polypeptide reads, in one-letter code: Trans-aconitate 2-methyltransferase (258 aa).

This sequence belongs to the methyltransferase superfamily. Tam family.

The protein resides in the cytoplasm. It carries out the reaction trans-aconitate + S-adenosyl-L-methionine = (E)-3-(methoxycarbonyl)pent-2-enedioate + S-adenosyl-L-homocysteine. Its function is as follows. Catalyzes the S-adenosylmethionine monomethyl esterification of trans-aconitate. The polypeptide is Trans-aconitate 2-methyltransferase (Yersinia pestis bv. Antiqua (strain Antiqua)).